Consider the following 137-residue polypeptide: MFKEFKEFALKGNLVDLAVGFILGGAFGTIVTSLVNDIMMPPLGMLMGGVDFADLFISLNGTEYVSLVAATEAGAPVIAYGKFINAVISFVIMALALFFVIKGMNTLKKKEEAAPPPAPPRQEVLLEEIRNLLAKNQ.

2 consecutive transmembrane segments (helical) span residues Val15 to Val35 and Gly81 to Ile101.

The protein belongs to the MscL family. Homopentamer.

It is found in the cell inner membrane. Functionally, channel that opens in response to stretch forces in the membrane lipid bilayer. May participate in the regulation of osmotic pressure changes within the cell. The sequence is that of Large-conductance mechanosensitive channel from Hyphomonas neptunium (strain ATCC 15444).